The primary structure comprises 288 residues: Methyltransferase ucsB (288 aa).

S-adenosyl-L-methionine-binding positions include aspartate 87 and 121-122 (DA).

Belongs to the class I-like SAM-binding methyltransferase superfamily.

It functions in the pathway mycotoxin biosynthesis. Methyltransferase; part of the gene cluster that mediates the biosynthesis of UCS1025A, a member of the pyrrolizidinone family that acts as a strong telomerase inhibitor and displays potent antibacterial and antitumor properties. These compounds share a hemiaminal-containing pyrrolizidinone core fused with a gamma-lactone, giving a furopyrrolizidine that is connected to a decalin fragment. The polyketide synthase module (PKS) of the PKS-NRPS ucsA is responsible for the synthesis of the polyketide backbone via the condensation of an acetyl-CoA starter unit with 6 malonyl-CoA units. The downstream nonribosomal peptide synthetase (NRPS) module then amidates the carboxyl end of the polyketide with a 2S,3S-methylproline derived from L-isoleucine by the 2-oxoglutarate-dependent dioxygenase ucsF which converts L-isoleucine to (4S,5S)-4-methylpyrroline-5-carboxylate that is further converted to 2S,3S-methylproline by the pyrroline-5-carboxylate reductase ucsG. Reductive release of the completed aminoacyl polyketide from the assembly line can form the 3-pyrrolin-2-one structure via an intramolecular Knoevenagel reaction. Because ucsA lacks a designated enoylreductase (ER) domain, the required activity is provided the enoyl reductase ucsL. This keto acyclic precursor is the substrate of the Diels-Alderase ucsH, that catalyzes the Diels-Alder cycloaddition. Oxidation of the 3S-methyl group to a carboxylate by the cytochrome P450 monooxygenase ucsK allows an oxa-Michael cyclization that might involve the reductase/dehydrogenase ucsI and which furnishes the furopyrrolizidine. The oxidase ucsJ likely plays a critical role in stereoselective reduction of the C5-C6 double bond to afford the required R-configured carboxylate group. Further enolization and oxidation at C5 by an unidentified enzyme affords the last intermediate that can undergo oxa-Michael cyclization to yield UCS1025A. This is Methyltransferase ucsB from Acremonium sp.